Here is a 139-residue protein sequence, read N- to C-terminus: Chemical-damaging agent resistance protein B (139 aa).

Belongs to the CAPAB/TerDEXZ family.

Its function is as follows. Not known; could confer methyl methane sulfonate (MMS), mitomycin C (MC), and UV resistance. This chain is Chemical-damaging agent resistance protein B, found in Clostridium acetobutylicum.